A 1171-amino-acid chain; its full sequence is Zinc finger BED domain-containing protein 4 (1171 aa).

The tract at residues 25 to 62 (EEEDDDGIPPDSLERMDFKSEQEDMKQTDSGGERAGLG) is disordered. The segment covering 36-51 (SLERMDFKSEQEDMKQ) has biased composition (basic and acidic residues). Lysine 43 participates in a covalent cross-link: Glycyl lysine isopeptide (Lys-Gly) (interchain with G-Cter in SUMO2). 2 consecutive BED-type zinc fingers follow at residues 115 to 172 (RKKS…LIQE) and 285 to 342 (RRRS…VLQE). The Zn(2+) site is built by cysteine 136, cysteine 139, histidine 160, histidine 165, cysteine 306, cysteine 309, histidine 330, and histidine 335. Low complexity predominate over residues 362-385 (LLPPEGELSSVSSSPVKPVRESPS). The tract at residues 362-405 (LLPPEGELSSVSSSPVKPVRESPSASSSPDRLTEDLQSHLNPGD) is disordered. 2 consecutive BED-type zinc fingers follow at residues 456–512 (RLKS…VGSQ) and 558–615 (KKTS…LKTE). Zn(2+)-binding residues include cysteine 477 and cysteine 480. Residue lysine 489 forms a Glycyl lysine isopeptide (Lys-Gly) (interchain with G-Cter in SUMO2) linkage. Positions 500, 505, 579, 582, 603, and 608 each coordinate Zn(2+). The tract at residues 614–640 (TEVSETARPSSPDTRVPRGTELSGASS) is disordered. Serine 624 bears the Phosphoserine mark. The required for homodimerization and nuclear accumulation stretch occupies residues 1086-1171 (LAYLEEEVLE…VNLPLIYFQY (86 aa)).

As to quaternary structure, homodimer; via C-terminus. Interacts with MYH9. Interacts with SAFB/SAFB1. As to expression, expressed in testis, heart, lung, and weakly expressed in brain, liver, muscle, placenta and small intestine. Expressed in the retina, found in the cone photoreceptors, Mueller cells, cone pedicles and in the innermost retinal layer.

The protein localises to the nucleus. It localises to the cytoplasm. It is found in the photoreceptor inner segment. Its function is as follows. Transcriptional regulator that binds to poly-guanine tracts in gene promoters and activates transcription. Able to bind single- and double-stranded DNA and RNA. This chain is Zinc finger BED domain-containing protein 4 (ZBED4), found in Homo sapiens (Human).